A 207-amino-acid polypeptide reads, in one-letter code: Ribonuclease HII (207 aa).

The RNase H type-2 domain maps to 1 to 207; it reads MDVLGIDEAG…ATVEKMKNSQ (207 aa). The a divalent metal cation site is built by Asp7, Glu8, and Asp105.

It belongs to the RNase HII family. The cofactor is Mn(2+). Mg(2+) is required as a cofactor.

The protein localises to the cytoplasm. The enzyme catalyses Endonucleolytic cleavage to 5'-phosphomonoester.. Functionally, endonuclease that specifically degrades the RNA of RNA-DNA hybrids. This Methanobrevibacter smithii (strain ATCC 35061 / DSM 861 / OCM 144 / PS) protein is Ribonuclease HII.